A 506-amino-acid polypeptide reads, in one-letter code: MDLLLLEKTLLALFIAATIAVTISKLRGKRFKLPPGPIPVPIFGYWLQVGDDLNHRNLTDYAKRFGEIFLLRMGQRNLVVVSSPELAKEVLHTQCVEFGSRTRNVVFDIFTGKGQDMVFTVYGEHWRKMRRIMTVPFFTNKVVQQYRYGWESEAESVVNDVKNNAEASVGGIVIRKRLQLMMYNIMYRIMFDRRFESEEDPLFVKLKALNGERSRLAQSFEYNYGDFIPILRPFLKGYLKVCKEVKDRRLQLFKDYFVDERKKLESTKSTTSNDGLKCAIDHILDAQKKGEINDDNVLYIVENINVAAIETTLWSIEWGIAELVNHQDIQNKVREEMDRVLGPGHQVTEPDLHKLPYLQAVIKETLRLRMAIPLLVPHMNLHDPKLNGFDIPAESKILVNAWWLPNNPAHWKKPEEFRPERFLEEESHVEANGNDFRYLPFGVGRRSCPGIILALPILGITIGRLVQNVELLPPPGQSKIDTSEKGGQFSLHILKHSTIVAKPRSF.

Residues 3–23 traverse the membrane as a helical segment; the sequence is LLLLEKTLLALFIAATIAVTI. (E)-cinnamate-binding positions include 213–218 and A307; that span reads RSRLAQ. Heme is bound at residue C448.

It belongs to the cytochrome P450 family. Requires heme as cofactor.

Its subcellular location is the membrane. It carries out the reaction (E)-cinnamate + reduced [NADPH--hemoprotein reductase] + O2 = (E)-4-coumarate + oxidized [NADPH--hemoprotein reductase] + H2O + H(+). It functions in the pathway phenylpropanoid metabolism; trans-4-coumarate biosynthesis; trans-4-coumarate from trans-cinnamate: step 1/1. Its function is as follows. Catalyzes the first oxidative step of the phenylpropanoid pathway in higher plants by transforming trans-cinnamate into p-coumarate. The compounds formed by this pathway are essential components for lignification, pollination, and defense against ultraviolet light, predators and pathogens. In Medicago sativa (Alfalfa), this protein is Trans-cinnamate 4-monooxygenase (CYP73A3).